The sequence spans 260 residues: Tropinone reductase homolog At1g07450 (260 aa).

Leu14–His38 contacts NADP(+). Substrate is bound at residue Ser147. The active-site Proton acceptor is the Tyr159.

This sequence belongs to the short-chain dehydrogenases/reductases (SDR) family. SDR65C subfamily.

The chain is Tropinone reductase homolog At1g07450 from Arabidopsis thaliana (Mouse-ear cress).